The sequence spans 90 residues: MSRTVFCTFLNREAEGLDFQSYPGDLGKRIYDHISKEAWGQWMAKQTMLINEKKLNMMNPDDRSLLAREMEKFLFEGHDVHIEGYTPPNQ.

Belongs to the Fe(2+)-trafficking protein family. As to quaternary structure, monomer.

Functionally, could be a mediator in iron transactions between iron acquisition and iron-requiring processes, such as synthesis and/or repair of Fe-S clusters in biosynthetic enzymes. The chain is Probable Fe(2+)-trafficking protein from Edwardsiella ictaluri (strain 93-146).